The following is a 583-amino-acid chain: Inactive carboxylesterase-like protein VdtD (583 aa).

The signal sequence occupies residues 1 to 23 (MFMTQIVFGIAPTLLKTFSHLTA). N-linked (GlcNAc...) asparagine glycans are attached at residues Asn-84, Asn-109, Asn-221, Asn-265, Asn-307, Asn-350, Asn-388, Asn-448, and Asn-468.

It belongs to the type-B carboxylesterase/lipase family.

Its pathway is secondary metabolite biosynthesis. Inactive carboxylesterase-like protein; part of the gene cluster that mediates the biosynthesis of viriditoxin, one of the 'classical' secondary metabolites produced by fungi and that has antibacterial activity. The first step is performed by the polyketide synthase VdtA which condenses one acetyl-CoA and 6 malonyl-CoA units to form the heptaketide monomer backbone of viriditoxin. The product of VdtA is then O-methylated on C7 by the O-methyltransferase VdtC. The O-methyl group is important for the stereoselective coupling of the monomers at the final step of viriditoxin biosynthesis. The short-chain dehydrogenase/reductase VdtF then acts as a stereospecific reductase converting the pyrone to dihydropyrone via the reduction of the C3-C4 double bond. The FAD-binding monooxygenase VdtE then converts the ketone group into a methyl-ester group to yield semi-viriditoxin. Finally, the laccase VdtB is involved in dimerization of 2 semi-viriditoxin molecules to yield the final viriditoxin. VdtB is responsible for the regioselective 6,6'-coupling of semi-viriditoxin, which yields (M)-viriditoxin and (P)-viriditoxin at a ratio of 1:2. The non-catalytic carboxylesterase-like protein VdtD affects the stereochemistical outcome of the coupling. The highly reducing polyketide synthase VdtX is not involved in viriditoxin synthesis, but might possibly play a role in the production of additional metabolites not identified yet. This Byssochlamys spectabilis (Paecilomyces variotii) protein is Inactive carboxylesterase-like protein VdtD.